We begin with the raw amino-acid sequence, 117 residues long: Ribonuclease P protein component 4 (117 aa).

Zn(2+) is bound by residues cysteine 63, cysteine 66, cysteine 92, and cysteine 95.

Belongs to the eukaryotic/archaeal RNase P protein component 4 family. Consists of a catalytic RNA component and at least 4 protein subunits. Forms a subcomplex with Rnp1 which stimulates the catalytic RNA. Zn(2+) serves as cofactor.

It localises to the cytoplasm. It carries out the reaction Endonucleolytic cleavage of RNA, removing 5'-extranucleotides from tRNA precursor.. Functionally, part of ribonuclease P, a protein complex that generates mature tRNA molecules by cleaving their 5'-ends. The RNA is catalytic, but its KM for pre-tRNA is 170-fold decreased in the presence of the 4 known protein subunits (Rnp1-4). The protein subunits also decrease the amount of Mg(2+) needed for activity. The polypeptide is Ribonuclease P protein component 4 (Pyrococcus furiosus (strain ATCC 43587 / DSM 3638 / JCM 8422 / Vc1)).